The primary structure comprises 309 residues: Transcription elongation factor S-II (309 aa).

The region spanning 5 to 79 (EVLVHVKNLE…SSWKDAINKN (75 aa)) is the TFIIS N-terminal domain. Residues 78–142 (KNKRSRQAQQ…NSKNDGVDTA (65 aa)) are disordered. A compositionally biased stretch (basic and acidic residues) spans 88–102 (HHQDHAPGNAEDKTT). Over residues 103-120 (VGESVNGVQQPASSQSDA) the composition is skewed to polar residues. Ser-116 is modified (phosphoserine). The region spanning 148 to 264 (LRDQVLKALY…NAQGATIERS (117 aa)) is the TFIIS central domain. The TFIIS-type zinc finger occupies 267 to 307 (DRFTCGKCKEKKVSYYQLQTRSADEPLTTFCTCEACGNRWK). Zn(2+)-binding residues include Cys-271, Cys-274, Cys-299, and Cys-302.

It belongs to the TFS-II family.

The protein resides in the nucleus. Its function is as follows. Necessary for efficient RNA polymerase II transcription elongation past template-encoded arresting sites. The arresting sites in DNA have the property of trapping a certain fraction of elongating RNA polymerases that pass through, resulting in locked ternary complexes. Cleavage of the nascent transcript by S-II allows the resumption of elongation from the new 3'-terminus. Can promote the transfer of one strand of a double-stranded DNA molecule to a homologous single strand and thus may be involved in recombination. In Saccharomyces cerevisiae (strain ATCC 204508 / S288c) (Baker's yeast), this protein is Transcription elongation factor S-II (DST1).